Consider the following 232-residue polypeptide: N-(5'-phosphoribosyl)anthranilate isomerase (232 aa).

Belongs to the TrpF family.

It carries out the reaction N-(5-phospho-beta-D-ribosyl)anthranilate = 1-(2-carboxyphenylamino)-1-deoxy-D-ribulose 5-phosphate. Its pathway is amino-acid biosynthesis; L-tryptophan biosynthesis; L-tryptophan from chorismate: step 3/5. The sequence is that of N-(5'-phosphoribosyl)anthranilate isomerase (TRP1) from Wickerhamomyces anomalus (Yeast).